Here is a 433-residue protein sequence, read N- to C-terminus: Transcription factor TCP18 (433 aa).

Disordered stretches follow at residues glutamine 130–aspartate 163 and aspartate 247–isoleucine 281. In terms of domain architecture, TCP spans arginine 148 to isoleucine 206. One can recognise a R domain in the interval lysine 287 to lysine 304.

In terms of tissue distribution, expressed in unelongated axillary buds, and, to a lower extent, in axillary structures such as flowers and siliques.

It localises to the nucleus. Transcription factor that prevents axillary bud outgrowth and delays early axillary bud development. Indirectly required for the auxin-induced control of apical dominance. The polypeptide is Transcription factor TCP18 (Arabidopsis thaliana (Mouse-ear cress)).